The following is a 549-amino-acid chain: Oxygen-dependent choline dehydrogenase (549 aa).

4–33 lines the FAD pocket; that stretch reads DYIIIGSGSAGSALAHRLSEDSRNSVIVLE. Catalysis depends on H465, which acts as the Proton acceptor.

It belongs to the GMC oxidoreductase family. Requires FAD as cofactor.

The enzyme catalyses choline + A = betaine aldehyde + AH2. It catalyses the reaction betaine aldehyde + NAD(+) + H2O = glycine betaine + NADH + 2 H(+). It participates in amine and polyamine biosynthesis; betaine biosynthesis via choline pathway; betaine aldehyde from choline (cytochrome c reductase route): step 1/1. Functionally, involved in the biosynthesis of the osmoprotectant glycine betaine. Catalyzes the oxidation of choline to betaine aldehyde and betaine aldehyde to glycine betaine at the same rate. The chain is Oxygen-dependent choline dehydrogenase from Sinorhizobium fredii (strain NBRC 101917 / NGR234).